We begin with the raw amino-acid sequence, 634 residues long: DNA-directed RNA polymerase subunit gamma (634 aa).

Zn(2+) contacts are provided by C74, C76, C89, and C92. Mg(2+)-binding residues include D471, D473, and D475.

The protein belongs to the RNA polymerase beta' chain family. RpoC1 subfamily. As to quaternary structure, in cyanobacteria the RNAP catalytic core is composed of 2 alpha, 1 beta, 1 beta', 1 gamma and 1 omega subunit. When a sigma factor is associated with the core the holoenzyme is formed, which can initiate transcription. The cofactor is Mg(2+). Requires Zn(2+) as cofactor.

It carries out the reaction RNA(n) + a ribonucleoside 5'-triphosphate = RNA(n+1) + diphosphate. DNA-dependent RNA polymerase catalyzes the transcription of DNA into RNA using the four ribonucleoside triphosphates as substrates. In Prochlorococcus marinus (strain MIT 9515), this protein is DNA-directed RNA polymerase subunit gamma.